The chain runs to 94 residues: Acylphosphatase (94 aa).

Residues 5-94 (RLTAFVHGHV…PRDVEGFVER (90 aa)) form the Acylphosphatase-like domain. Residues R20 and N38 contribute to the active site.

Belongs to the acylphosphatase family.

The catalysed reaction is an acyl phosphate + H2O = a carboxylate + phosphate + H(+). The chain is Acylphosphatase (acyP) from Corynebacterium glutamicum (strain R).